Here is a 434-residue protein sequence, read N- to C-terminus: Epimerase FSL3 (434 aa).

125-126 (GF) contacts substrate. E392 serves as the catalytic Proton acceptor.

This sequence belongs to the aldose epimerase family. As to quaternary structure, monomer.

It functions in the pathway secondary metabolite biosynthesis. Its function is as follows. Epimerase; part of the gene cluster that mediates the biosynthesis of fusarielins F, G and H, decaketide compounds with 5 methylations and a decaline core that act as mycoestrogens as they stimulate growth of MCF-7 breast cancer cells. The initial compound in the pathway is produced by the reducing polyketide synthase FSL1. FSL1 lacks an active enoyl reductase (ER) domain and biosynthesis of fusarielins relies on the trans-acting enoyl reductase FSL5, before it is released through hydrolysis catalyzed by the thioesterase FSL2. Fusarielins F, G, and H have a C11=C12 cis double bond and is fully reduced between C10 and C11 and between C12 and C13. FSL3 can be involved in the formation of the C11=C12 cis double bond by moving a hypothetical C10=C11 or C12=C13 trans double bond to form prefusarielin. Prefusarielin is oxygenated at C15 and C16 by the cytochrome P450 monooxygenase FSL4, resulting in fusarielin F, which subsequently is epoxidized into fusarielin G by the same enzyme. The final step in the pathway is a reduction of the carboxylic acid moiety to yield fusarielin H via a still undetermined mechanism. This Gibberella zeae (strain ATCC MYA-4620 / CBS 123657 / FGSC 9075 / NRRL 31084 / PH-1) (Wheat head blight fungus) protein is Epimerase FSL3.